We begin with the raw amino-acid sequence, 147 residues long: uncharacterized protein (147 aa).

The interval methionine 1–arginine 37 is disordered. Polar residues predominate over residues histidine 15 to valine 29. The 77-residue stretch at proline 71–valine 147 folds into the Cytochrome b5 heme-binding domain. Residues histidine 106 and histidine 129 each contribute to the heme site.

It belongs to the cytochrome b5 family.

This is an uncharacterized protein from Schizosaccharomyces pombe (strain 972 / ATCC 24843) (Fission yeast).